We begin with the raw amino-acid sequence, 314 residues long: Olfactory receptor 5G29 (314 aa).

At 1–25 (MEEKNQTIVMEFFFLGLTDHLYQKI) the chain is on the extracellular side. N-linked (GlcNAc...) asparagine glycosylation occurs at N5. A helical membrane pass occupies residues 26 to 46 (ALFITILFVYLVTLGGNLGMI). At 47 to 54 (TLIWADPR) the chain is on the cytoplasmic side. A helical transmembrane segment spans residues 55 to 75 (LHTPMYFFLSHLSFVDMCSSS). The Extracellular portion of the chain corresponds to 76-99 (SIAPKMLCDIFAEEKRISFMGCAA). C97 and C189 are oxidised to a cystine. The chain crosses the membrane as a helical span at residues 100 to 120 (QMWFFGFFVGTECFLLASMAY). Topologically, residues 121-133 (DRYTAICKPLLYT) are cytoplasmic. The chain crosses the membrane as a helical span at residues 134–154 (LLMSQRVCVHLVVGPYVFAII). Topologically, residues 155–196 (NITTHTTLAFCLPFCGSNTINHFFCDVSPLLSLACADSWVNK) are extracellular. The chain crosses the membrane as a helical span at residues 197–217 (VVLFVLSGAIGVFSGLIIIVS). Topologically, residues 218 to 237 (YVSILMTIFKIQTADGKQKA) are cytoplasmic. A helical transmembrane segment spans residues 238–258 (FSTCSSHLSAVSILYGTLFFI). Topologically, residues 259 to 271 (YVRPSASFSLNIN) are extracellular. A helical membrane pass occupies residues 272 to 292 (KMISLFYTVVIPMLNPLIYSL). Topologically, residues 293–312 (RNKEVKGAFRRKVQKKHFPA) are cytoplasmic.

This sequence belongs to the G-protein coupled receptor 1 family.

It is found in the cell membrane. Its function is as follows. Potential odorant receptor. This Mus musculus (Mouse) protein is Olfactory receptor 5G29.